The chain runs to 140 residues: Large ribosomal subunit protein uL11 (140 aa).

This sequence belongs to the universal ribosomal protein uL11 family. As to quaternary structure, part of the ribosomal stalk of the 50S ribosomal subunit. Interacts with L10 and the large rRNA to form the base of the stalk. L10 forms an elongated spine to which L12 dimers bind in a sequential fashion forming a multimeric L10(L12)X complex. One or more lysine residues are methylated.

Forms part of the ribosomal stalk which helps the ribosome interact with GTP-bound translation factors. In Heliobacterium modesticaldum (strain ATCC 51547 / Ice1), this protein is Large ribosomal subunit protein uL11.